A 440-amino-acid chain; its full sequence is Armadillo-like helical domain containing protein 1 (440 aa).

This is Armadillo-like helical domain containing protein 1 from Homo sapiens (Human).